The chain runs to 228 residues: L-ornithine N5-acetyltransferase NATA1 (228 aa).

Positions Met-1 to His-21 are disordered. The N-acetyltransferase domain occupies Val-77–Asn-227. Residues Ile-153 to Met-155, Arg-161 to Lys-166, Asn-192 to Ala-195, and Tyr-199 contribute to the acetyl-CoA site.

This sequence belongs to the acetyltransferase family.

In terms of biological role, acetyltransferase that converts ornithine to N5-acetylornithine, which is likely used in plant defense. The sequence is that of L-ornithine N5-acetyltransferase NATA1 (NATA1) from Arabidopsis thaliana (Mouse-ear cress).